An 823-amino-acid polypeptide reads, in one-letter code: Probable inorganic carbon transporter subunit DabA (823 aa).

Zn(2+)-binding residues include Cys-361, Asp-363, His-527, and Cys-542.

Belongs to the inorganic carbon transporter (TC 9.A.2) DabA family. Forms a complex with DabB. Zn(2+) is required as a cofactor.

The protein resides in the cell inner membrane. Its activity is regulated as follows. Intracellular DIC accumulation is sensitive to CCCP (carbonyl cyanide-m-chlorophenylhydrazone) and DCCD (N,N-dicyclohexylcarbodiimide) and therefore likely driven by either proton potential, ATP, or both. Its function is as follows. Part of an energy-coupled inorganic carbon pump. Probably involved in transport of dissolved inorganic carbon (DIC) with upstream gene dabB (Tcr_0853); has been suggested to be a proton-DIC symporter. The polypeptide is Probable inorganic carbon transporter subunit DabA (Hydrogenovibrio crunogenus (strain DSM 25203 / XCL-2) (Thiomicrospira crunogena)).